Here is a 205-residue protein sequence, read N- to C-terminus: UPF0548 protein At2g17695 (205 aa).

It belongs to the UPF0548 family.

This is UPF0548 protein At2g17695 from Arabidopsis thaliana (Mouse-ear cress).